A 612-amino-acid chain; its full sequence is Cyclin-dependent kinase 8 (612 aa).

The region spanning 23–345 (FENSKEIGRG…CEEAMNDIYF (323 aa)) is the Protein kinase domain. ATP-binding positions include 29–37 (IGRGTYGLV) and K57. D155 (proton acceptor) is an active-site residue. 5 stretches are compositionally biased toward low complexity: residues 403–455 (QQQM…MGQP), 472–483 (HQMMQQQHQSQH), 543–555 (PQPGPSGYYQQRP), 564–573 (QGYMNPQMGM), and 600–612 (NPQQQQQWQQYHR). Disordered stretches follow at residues 403-483 (QQQM…QSQH) and 543-612 (PQPG…QYHR).

Belongs to the protein kinase superfamily. CMGC Ser/Thr protein kinase family. CDC2/CDKX subfamily. In terms of assembly, component of the Mediator complex. It depends on Mg(2+) as a cofactor.

The protein localises to the nucleus. It carries out the reaction L-seryl-[protein] + ATP = O-phospho-L-seryl-[protein] + ADP + H(+). The catalysed reaction is L-threonyl-[protein] + ATP = O-phospho-L-threonyl-[protein] + ADP + H(+). It catalyses the reaction [DNA-directed RNA polymerase] + ATP = phospho-[DNA-directed RNA polymerase] + ADP + H(+). Its function is as follows. Component of the Mediator complex, a coactivator involved in regulated gene transcription of nearly all RNA polymerase II-dependent genes. Mediator functions as a bridge to convey information from gene-specific regulatory proteins to the basal RNA polymerase II transcription machinery. Mediator is recruited to promoters by direct interactions with regulatory proteins and serves as a scaffold for the assembly of a functional pre-initiation complex with RNA polymerase II and the general transcription factors. Phosphorylates the CTD (C-terminal domain) of the large subunit of RNA polymerase II (RNAp II), which may inhibit the formation of a transcription initiation complex. This chain is Cyclin-dependent kinase 8 (cdk-8), found in Caenorhabditis briggsae.